The sequence spans 191 residues: UPF0302 protein SA1295 (191 aa).

This sequence belongs to the UPF0302 family.

The polypeptide is UPF0302 protein SA1295 (Staphylococcus aureus (strain N315)).